The chain runs to 450 residues: Bifunctional protein GlmU (450 aa).

A pyrophosphorylase region spans residues 1-229 (MRRHAIILAA…VEEIMGVNDR (229 aa)). UDP-N-acetyl-alpha-D-glucosamine is bound by residues 8–11 (LAAG), Lys-22, Gln-72, and 77–78 (GT). A Mg(2+)-binding site is contributed by Asp-102. 3 residues coordinate UDP-N-acetyl-alpha-D-glucosamine: Gly-139, Glu-154, and Asn-227. Asn-227 lines the Mg(2+) pocket. Positions 230 to 250 (VMLSQAEKAMQRRTNHYHMLN) are linker. The interval 251 to 450 (GVTIIDPDST…RQTTKEGYRK (200 aa)) is N-acetyltransferase. 2 residues coordinate UDP-N-acetyl-alpha-D-glucosamine: Arg-332 and Lys-350. The Proton acceptor role is filled by His-362. UDP-N-acetyl-alpha-D-glucosamine contacts are provided by Tyr-365 and Asn-376. Acetyl-CoA-binding positions include 385-386 (NY), Ala-422, and Arg-439.

In the N-terminal section; belongs to the N-acetylglucosamine-1-phosphate uridyltransferase family. It in the C-terminal section; belongs to the transferase hexapeptide repeat family. In terms of assembly, homotrimer. Requires Mg(2+) as cofactor.

The protein localises to the cytoplasm. It carries out the reaction alpha-D-glucosamine 1-phosphate + acetyl-CoA = N-acetyl-alpha-D-glucosamine 1-phosphate + CoA + H(+). The catalysed reaction is N-acetyl-alpha-D-glucosamine 1-phosphate + UTP + H(+) = UDP-N-acetyl-alpha-D-glucosamine + diphosphate. The protein operates within nucleotide-sugar biosynthesis; UDP-N-acetyl-alpha-D-glucosamine biosynthesis; N-acetyl-alpha-D-glucosamine 1-phosphate from alpha-D-glucosamine 6-phosphate (route II): step 2/2. It participates in nucleotide-sugar biosynthesis; UDP-N-acetyl-alpha-D-glucosamine biosynthesis; UDP-N-acetyl-alpha-D-glucosamine from N-acetyl-alpha-D-glucosamine 1-phosphate: step 1/1. It functions in the pathway bacterial outer membrane biogenesis; LPS lipid A biosynthesis. Functionally, catalyzes the last two sequential reactions in the de novo biosynthetic pathway for UDP-N-acetylglucosamine (UDP-GlcNAc). The C-terminal domain catalyzes the transfer of acetyl group from acetyl coenzyme A to glucosamine-1-phosphate (GlcN-1-P) to produce N-acetylglucosamine-1-phosphate (GlcNAc-1-P), which is converted into UDP-GlcNAc by the transfer of uridine 5-monophosphate (from uridine 5-triphosphate), a reaction catalyzed by the N-terminal domain. The polypeptide is Bifunctional protein GlmU (Staphylococcus aureus (strain Mu50 / ATCC 700699)).